A 397-amino-acid chain; its full sequence is Elongation factor Tu (397 aa).

One can recognise a tr-type G domain in the interval 10 to 207 (LPHVNVGTIG…TLDAYIPEPV (198 aa)). The interval 19–26 (GHVDHGKT) is G1. Position 19 to 26 (19 to 26 (GHVDHGKT)) interacts with GTP. T26 serves as a coordination point for Mg(2+). The G2 stretch occupies residues 60–64 (GITIN). Residues 81–84 (DCPG) are G3. GTP is bound by residues 81–85 (DCPGH) and 136–139 (NKAD). The tract at residues 136-139 (NKAD) is G4. The tract at residues 174-176 (SAR) is G5.

Belongs to the TRAFAC class translation factor GTPase superfamily. Classic translation factor GTPase family. EF-Tu/EF-1A subfamily. As to quaternary structure, monomer.

The protein resides in the cytoplasm. It catalyses the reaction GTP + H2O = GDP + phosphate + H(+). Functionally, GTP hydrolase that promotes the GTP-dependent binding of aminoacyl-tRNA to the A-site of ribosomes during protein biosynthesis. The protein is Elongation factor Tu of Pseudomonas entomophila (strain L48).